Consider the following 293-residue polypeptide: 4-diphosphocytidyl-2-C-methyl-D-erythritol kinase (293 aa).

Lys16 is a catalytic residue. 99 to 109 is an ATP binding site; the sequence is PMGAGLGGGSS. Asp141 is an active-site residue.

Belongs to the GHMP kinase family. IspE subfamily.

It carries out the reaction 4-CDP-2-C-methyl-D-erythritol + ATP = 4-CDP-2-C-methyl-D-erythritol 2-phosphate + ADP + H(+). Its pathway is isoprenoid biosynthesis; isopentenyl diphosphate biosynthesis via DXP pathway; isopentenyl diphosphate from 1-deoxy-D-xylulose 5-phosphate: step 3/6. In terms of biological role, catalyzes the phosphorylation of the position 2 hydroxy group of 4-diphosphocytidyl-2C-methyl-D-erythritol. The protein is 4-diphosphocytidyl-2-C-methyl-D-erythritol kinase of Burkholderia multivorans (strain ATCC 17616 / 249).